An 88-amino-acid polypeptide reads, in one-letter code: Arminin 7965 (88 aa).

The N-terminal stretch at 1–18 (MKTVFAILFLTFIAFTYA) is a signal peptide. Residues 19–57 (KSYEDVKEEIKNEVEREIFEDLEEESDVLDSNVRELNDA) constitute a propeptide that is removed on maturation. A85 is modified (alanine amide).

This sequence belongs to the arminin family. As to expression, expressed in entodermal epithelium along the body column.

The protein localises to the secreted. The protein resides in the target cell membrane. Its function is as follows. Antimicrobial peptide with a broad-spectrum antimicrobial activity. Keeps its antibacterial activity under a wide range of salt concentrations that mimic physiological conditions of human blood, which is surprising, since Hydra is an obligate freshwater animal with nearly no salt tolerance. Does not affect red blood cells. The protein is Arminin 7965 of Hydra vulgaris (Hydra).